The following is a 397-amino-acid chain: Argininosuccinate synthase (397 aa).

8 to 16 (AYSGGLDTS) contacts ATP. Y87 provides a ligand contact to L-citrulline. ATP is bound at residue G117. Positions 119, 123, and 124 each coordinate L-aspartate. Position 123 (N123) interacts with L-citrulline. Residues R127, S175, E259, and Y271 each contribute to the L-citrulline site.

It belongs to the argininosuccinate synthase family. Type 1 subfamily. In terms of assembly, homotetramer.

The protein resides in the cytoplasm. It catalyses the reaction L-citrulline + L-aspartate + ATP = 2-(N(omega)-L-arginino)succinate + AMP + diphosphate + H(+). The protein operates within amino-acid biosynthesis; L-arginine biosynthesis; L-arginine from L-ornithine and carbamoyl phosphate: step 2/3. The polypeptide is Argininosuccinate synthase (Streptomyces griseus subsp. griseus (strain JCM 4626 / CBS 651.72 / NBRC 13350 / KCC S-0626 / ISP 5235)).